We begin with the raw amino-acid sequence, 496 residues long: Glycerol kinase (496 aa).

Thr11 provides a ligand contact to ADP. ATP contacts are provided by Thr11, Thr12, and Ser13. Thr11 provides a ligand contact to sn-glycerol 3-phosphate. Arg15 contacts ADP. Residues Arg81, Glu82, Tyr133, and Asp242 each coordinate sn-glycerol 3-phosphate. The glycerol site is built by Arg81, Glu82, Tyr133, Asp242, and Gln243. Thr264 and Gly307 together coordinate ADP. Positions 264, 307, and 311 each coordinate ATP. Asn413 contributes to the ADP binding site.

The protein belongs to the FGGY kinase family.

It carries out the reaction glycerol + ATP = sn-glycerol 3-phosphate + ADP + H(+). The protein operates within polyol metabolism; glycerol degradation via glycerol kinase pathway; sn-glycerol 3-phosphate from glycerol: step 1/1. Its activity is regulated as follows. Inhibited by fructose 1,6-bisphosphate (FBP). In terms of biological role, key enzyme in the regulation of glycerol uptake and metabolism. Catalyzes the phosphorylation of glycerol to yield sn-glycerol 3-phosphate. In Borrelia duttonii (strain Ly), this protein is Glycerol kinase.